The following is a 283-amino-acid chain: Pantothenate synthetase (283 aa).

Residue 30–37 (MGYLHDGH) coordinates ATP. His37 (proton donor) is an active-site residue. Gln61 provides a ligand contact to (R)-pantoate. Gln61 contacts beta-alanine. 147 to 150 (GKKD) is an ATP binding site. Gln153 provides a ligand contact to (R)-pantoate. ATP-binding positions include Ile176 and 184-187 (MSSR).

This sequence belongs to the pantothenate synthetase family. As to quaternary structure, homodimer.

The protein resides in the cytoplasm. It carries out the reaction (R)-pantoate + beta-alanine + ATP = (R)-pantothenate + AMP + diphosphate + H(+). It participates in cofactor biosynthesis; (R)-pantothenate biosynthesis; (R)-pantothenate from (R)-pantoate and beta-alanine: step 1/1. Catalyzes the condensation of pantoate with beta-alanine in an ATP-dependent reaction via a pantoyl-adenylate intermediate. The sequence is that of Pantothenate synthetase from Geobacter sulfurreducens (strain ATCC 51573 / DSM 12127 / PCA).